Here is a 733-residue protein sequence, read N- to C-terminus: Protein OBERON 3 (733 aa).

The span at 1–15 (MIGEKDLAGDGECSR) shows a compositional bias: basic and acidic residues. Disordered stretches follow at residues 1–42 (MIGE…YHQK) and 118–142 (NPNSSKRKAHEEEEEAEEEEDKKSN). Polar residues predominate over residues 21–30 (PRFSNLNNQT). Residues 120-153 (NSSKRKAHEEEEEAEEEEDKKSNKIETLNLSLAL) are a coiled coil. A PHD-type zinc finger spans residues 436 to 500 (SCMCPVCLRF…MFHCIGCAHK (65 aa)). A disordered region spans residues 592–614 (VAAETSYRKDEASVTPSTSKDQK). Residues 644-733 (MFQKKADEAR…RMEVTRQQLV (90 aa)) are a coiled coil.

As to quaternary structure, self-interacts. Interacts with OBE1 and OBE2. Interacts with OBE4.

The protein localises to the nucleus. In terms of biological role, probable transcription factor that functions redundantly with OBE4 in specification of the hypophysis and establishment of the embryonic root. Involved in the activation of ARF5/MP-dependent gene expression during embryonic root meristem initiation. Involved in shoot meristem homeostasis. In Arabidopsis thaliana (Mouse-ear cress), this protein is Protein OBERON 3.